The following is a 789-amino-acid chain: Aconitate hydratase, mitochondrial (789 aa).

Residues 1-32 constitute a mitochondrion transit peptide; the sequence is MFCKISRAPARMGSRIFTQSTLRSFSCAPVAA. Residues Gln-106 and 199-201 each bind substrate; that span reads DSH. Cys-392, Cys-455, and Cys-458 together coordinate [4Fe-4S] cluster. Residues Arg-481, Arg-486, Arg-613, and 676 to 677 each bind substrate; that span reads SR.

This sequence belongs to the aconitase/IPM isomerase family. As to quaternary structure, monomer. [4Fe-4S] cluster serves as cofactor.

Its subcellular location is the mitochondrion. The enzyme catalyses citrate = D-threo-isocitrate. It functions in the pathway carbohydrate metabolism; tricarboxylic acid cycle; isocitrate from oxaloacetate: step 2/2. Catalyzes the isomerization of citrate to isocitrate via cis-aconitate, a step in the citric acid cycle. The chain is Aconitate hydratase, mitochondrial from Schizosaccharomyces pombe (strain 972 / ATCC 24843) (Fission yeast).